The sequence spans 384 residues: Putative F-box/kelch-repeat protein At3g27910 (384 aa).

Positions 27–79 (SPTSLPLPDEIIVNCFAYIPRCDYPSLSLVSKTFNRLITSIELNIVRSLFQRT) constitute an F-box domain. Kelch repeat units follow at residues 138-184 (KIYV…IVDG), 185-235 (KIYV…VMNK), 237-274 (IYIM…VIDN), and 275-323 (MLYT…MANH).

The polypeptide is Putative F-box/kelch-repeat protein At3g27910 (Arabidopsis thaliana (Mouse-ear cress)).